A 223-amino-acid chain; its full sequence is Cytotoxic T-lymphocyte protein 4 (223 aa).

Residues Met1–Cys35 form the signal peptide. Topologically, residues Lys36–Asp161 are extracellular. An Ig-like V-type domain is found at His39 to Tyr140. Positions Val46–Ser50 are homodimerization. Cystine bridges form between Cys58/Cys129 and Cys85/Cys103. A glycan (N-linked (GlcNAc...) asparagine) is linked at Asn113. The segment at Met134–Tyr139 is important for interaction with CD80 and CD86. Asn145 carries N-linked (GlcNAc...) asparagine glycosylation. The segment at Tyr150–Glu155 is homodimerization. A helical membrane pass occupies residues Phe162–Thr182. Topologically, residues Ala183–Asn223 are cytoplasmic. Tyr201 carries the post-translational modification Phosphotyrosine; by TXK and JAK2.

In terms of assembly, homodimer; disulfide-linked. Binds to CD80/B7-1 and CD86/B7.2. Interacts with ICOSLG. In terms of processing, N-glycosylation is important for dimerization. Phosphorylation at Tyr-201 prevents binding to the AP-2 adapter complex, blocks endocytosis, and leads to retention of CTLA4 on the cell surface. As to expression, widely expressed with highest levels in lymphoid tissues. Detected in activated T-cells where expression levels are 30- to 50-fold less than CD28, the stimulatory coreceptor, on the cell surface following activation.

It is found in the cell membrane. Its function is as follows. Inhibitory receptor acting as a major negative regulator of T-cell responses. The affinity of CTLA4 for its natural B7 family ligands, CD80 and CD86, is considerably stronger than the affinity of their cognate stimulatory coreceptor CD28. The polypeptide is Cytotoxic T-lymphocyte protein 4 (CTLA4) (Homo sapiens (Human)).